We begin with the raw amino-acid sequence, 208 residues long: uncharacterized protein (208 aa).

Residues 124 to 208 form a disordered region; the sequence is KKTGSSNART…PSFGKYSSLA (85 aa). The segment covering 133 to 170 has biased composition (basic and acidic residues); sequence TPDEGKKAKNAPEEEKVKTSGSEDAKGEESAVEGKEPE.

The protein localises to the golgi apparatus. This is an uncharacterized protein from Encephalitozoon cuniculi (strain GB-M1) (Microsporidian parasite).